A 354-amino-acid chain; its full sequence is Homeobox-leucine zipper protein HOX27 (354 aa).

Residues Ser98–Lys175 are disordered. Gly residues predominate over residues Gln148–Glu157. Positions Ser171 to Gln230 form a DNA-binding region, homeobox. Residues Lys229–Pro273 are leucine-zipper. Residues Ser294–Arg323 form a disordered region.

This sequence belongs to the HD-ZIP homeobox family. Class II subfamily. Expressed in seedlings, roots, stems, leaf sheaths and blades and panicles.

It is found in the nucleus. Its function is as follows. Probable transcription factor. This chain is Homeobox-leucine zipper protein HOX27 (HOX27), found in Oryza sativa subsp. indica (Rice).